The following is a 203-amino-acid chain: High frequency lysogenization protein HflD homolog (203 aa).

The protein belongs to the HflD family.

Its subcellular location is the cytoplasm. It is found in the cell inner membrane. In Histophilus somni (strain 2336) (Haemophilus somnus), this protein is High frequency lysogenization protein HflD homolog.